We begin with the raw amino-acid sequence, 949 residues long: RNA polymerase-associated protein RapA (949 aa).

Residues glutamate 164–asparagine 332 enclose the Helicase ATP-binding domain. ATP is bound at residue aspartate 177–threonine 184. Residues aspartate 278 to histidine 281 carry the DEAH box motif. A Helicase C-terminal domain is found at arginine 474 to histidine 628.

It belongs to the SNF2/RAD54 helicase family. RapA subfamily. In terms of assembly, interacts with the RNAP. Has a higher affinity for the core RNAP than for the holoenzyme. Its ATPase activity is stimulated by binding to RNAP.

In terms of biological role, transcription regulator that activates transcription by stimulating RNA polymerase (RNAP) recycling in case of stress conditions such as supercoiled DNA or high salt concentrations. Probably acts by releasing the RNAP, when it is trapped or immobilized on tightly supercoiled DNA. Does not activate transcription on linear DNA. Probably not involved in DNA repair. This chain is RNA polymerase-associated protein RapA, found in Pseudomonas fluorescens (strain ATCC BAA-477 / NRRL B-23932 / Pf-5).